Reading from the N-terminus, the 108-residue chain is UPF0060 membrane protein YnfA (108 aa).

Residues 1–5 (MLKTT) are Periplasmic-facing. The chain crosses the membrane as a helical span at residues 6–26 (LLFFVTALCEIIGCFLPWLWL). At 27–30 (KRGA) the chain is on the cytoplasmic side. Residues 31–51 (SMWWLLPAAASLALFVWLLTL) form a helical membrane-spanning segment. At 52–60 (HPAASGRVY) the chain is on the periplasmic side. Residues 61–81 (AAYGGVYVCTALLWLRVVDGV) traverse the membrane as a helical segment. Residues 82–84 (RLT) are Cytoplasmic-facing. Residues 85-105 (VYDWCGALIALCGMLIIVVGW) traverse the membrane as a helical segment. Residues 106–108 (GRT) lie on the Periplasmic side of the membrane.

This sequence belongs to the UPF0060 family.

It is found in the cell inner membrane. The protein is UPF0060 membrane protein YnfA of Salmonella schwarzengrund (strain CVM19633).